Reading from the N-terminus, the 219-residue chain is Cytidylate kinase (219 aa).

21–29 (GPAASGKGT) lines the ATP pocket.

This sequence belongs to the cytidylate kinase family. Type 1 subfamily.

The protein resides in the cytoplasm. The catalysed reaction is CMP + ATP = CDP + ADP. It catalyses the reaction dCMP + ATP = dCDP + ADP. This Rickettsia prowazekii (strain Madrid E) protein is Cytidylate kinase.